The sequence spans 483 residues: Cysteine--tRNA ligase (483 aa).

Cysteine 27 is a binding site for Zn(2+). The 'HIGH' region signature appears at 29–39; it reads ITAYDYCHIGH. Positions 208, 231, and 235 each coordinate Zn(2+). Positions 263 to 267 match the 'KMSKS' region motif; it reads KMSKS. Residue lysine 266 participates in ATP binding.

The protein belongs to the class-I aminoacyl-tRNA synthetase family. As to quaternary structure, monomer. Zn(2+) is required as a cofactor.

The protein resides in the cytoplasm. It catalyses the reaction tRNA(Cys) + L-cysteine + ATP = L-cysteinyl-tRNA(Cys) + AMP + diphosphate. The sequence is that of Cysteine--tRNA ligase from Desulfovibrio desulfuricans (strain ATCC 27774 / DSM 6949 / MB).